Consider the following 365-residue polypeptide: Flagellar P-ring protein (365 aa).

The signal sequence occupies residues 1 to 19; it reads MIKFLSTFMLLLVTTVVQA.

The protein belongs to the FlgI family. As to quaternary structure, the basal body constitutes a major portion of the flagellar organelle and consists of four rings (L,P,S, and M) mounted on a central rod.

The protein resides in the periplasm. It localises to the bacterial flagellum basal body. Assembles around the rod to form the L-ring and probably protects the motor/basal body from shearing forces during rotation. This Escherichia fergusonii (strain ATCC 35469 / DSM 13698 / CCUG 18766 / IAM 14443 / JCM 21226 / LMG 7866 / NBRC 102419 / NCTC 12128 / CDC 0568-73) protein is Flagellar P-ring protein.